Reading from the N-terminus, the 520-residue chain is Probable bifunctional tRNA threonylcarbamoyladenosine biosynthesis protein (520 aa).

The segment at Met-1–Trp-318 is kae1. Positions 105, 109, and 126 each coordinate Fe cation. L-threonylcarbamoyladenylate contacts are provided by residues Tyr-126–Ala-130, Asp-158, Gly-171, Glu-175, and Asn-251. Asp-279 is a binding site for Fe cation. Positions Arg-327–Leu-520 constitute a Protein kinase domain. Residues Ser-333–Val-341 and Lys-350 contribute to the ATP site. Residue Asp-437 is the Proton acceptor; for kinase activity of the active site.

It in the N-terminal section; belongs to the KAE1 / TsaD family. The protein in the C-terminal section; belongs to the protein kinase superfamily. Tyr protein kinase family. BUD32 subfamily. In terms of assembly, component of the KEOPS complex that consists of Kae1, Bud32, Cgi121 and Pcc1; the whole complex dimerizes. Fe(2+) serves as cofactor.

Its subcellular location is the cytoplasm. It catalyses the reaction L-seryl-[protein] + ATP = O-phospho-L-seryl-[protein] + ADP + H(+). It carries out the reaction L-threonyl-[protein] + ATP = O-phospho-L-threonyl-[protein] + ADP + H(+). The catalysed reaction is L-threonylcarbamoyladenylate + adenosine(37) in tRNA = N(6)-L-threonylcarbamoyladenosine(37) in tRNA + AMP + H(+). Functionally, required for the formation of a threonylcarbamoyl group on adenosine at position 37 (t(6)A37) in tRNAs that read codons beginning with adenine. Is a component of the KEOPS complex that is probably involved in the transfer of the threonylcarbamoyl moiety of threonylcarbamoyl-AMP (TC-AMP) to the N6 group of A37. The Kae1 domain likely plays a direct catalytic role in this reaction. The Bud32 domain probably displays kinase activity that regulates Kae1 function. This Methanospirillum hungatei JF-1 (strain ATCC 27890 / DSM 864 / NBRC 100397 / JF-1) protein is Probable bifunctional tRNA threonylcarbamoyladenosine biosynthesis protein.